A 182-amino-acid polypeptide reads, in one-letter code: Large ribosomal subunit protein uL5 (182 aa).

It belongs to the universal ribosomal protein uL5 family. Part of the 50S ribosomal subunit; part of the 5S rRNA/L5/L18/L25 subcomplex. Contacts the 5S rRNA and the P site tRNA. Forms a bridge to the 30S subunit in the 70S ribosome.

This is one of the proteins that bind and probably mediate the attachment of the 5S RNA into the large ribosomal subunit, where it forms part of the central protuberance. In the 70S ribosome it contacts protein S13 of the 30S subunit (bridge B1b), connecting the 2 subunits; this bridge is implicated in subunit movement. Contacts the P site tRNA; the 5S rRNA and some of its associated proteins might help stabilize positioning of ribosome-bound tRNAs. The sequence is that of Large ribosomal subunit protein uL5 from Borrelia garinii subsp. bavariensis (strain ATCC BAA-2496 / DSM 23469 / PBi) (Borreliella bavariensis).